A 406-amino-acid chain; its full sequence is Pygopus homolog 2 (406 aa).

2 disordered regions span residues 1–73 (MAAS…DHLV) and 106–323 (VQGG…PQPP). N-acetylalanine is present on A2. S40 bears the Phosphoserine mark. The Nuclear localization signal motif lies at 41-47 (PEKKRRK). Composition is skewed to pro residues over residues 131–141 (RQPPPFPPNPM) and 149–158 (PQGPGYPPPG). Residues 164–179 (SQPFNQPLGQNFSPPS) are compositionally biased toward polar residues. The segment covering 236–252 (SLPPNTSPFPGPDPGFP) has biased composition (pro residues). A compositionally biased stretch (polar residues) spans 285-296 (NGNQPSFPPNSS). A Phosphothreonine modification is found at T302. The PHD-type zinc finger occupies 327-385 (VYPCGACRSEVNDDQDAILCEASCQKWFHRECTGMTESAYGLLTTEASAVWACDLCLKT).

As to quaternary structure, binds to BCL9 via the PHD-type zinc finger motif, and thereby becomes part of the nuclear beta-catenin/TCF complex.

The protein resides in the nucleus. Involved in signal transduction through the Wnt pathway. The polypeptide is Pygopus homolog 2 (PYGO2) (Homo sapiens (Human)).